Consider the following 312-residue polypeptide: Porphobilinogen deaminase (312 aa).

The residue at position 241 (cysteine 241) is an S-(dipyrrolylmethanemethyl)cysteine.

This sequence belongs to the HMBS family. Monomer. It depends on dipyrromethane as a cofactor.

It carries out the reaction 4 porphobilinogen + H2O = hydroxymethylbilane + 4 NH4(+). It participates in porphyrin-containing compound metabolism; protoporphyrin-IX biosynthesis; coproporphyrinogen-III from 5-aminolevulinate: step 2/4. Tetrapolymerization of the monopyrrole PBG into the hydroxymethylbilane pre-uroporphyrinogen in several discrete steps. The chain is Porphobilinogen deaminase from Trichlorobacter lovleyi (strain ATCC BAA-1151 / DSM 17278 / SZ) (Geobacter lovleyi).